Consider the following 202-residue polypeptide: Tumor necrosis factor alpha-induced protein 8-like protein 3 (202 aa).

Residues 1-10 (MDTDSGDLSE) are compositionally biased toward acidic residues. A disordered region spans residues 1 to 24 (MDTDSGDLSEGELSPGPEQFSSKS).

This sequence belongs to the TNFAIP8 family.

It localises to the cytoplasm. It is found in the cell membrane. Its function is as follows. May act as a lipid transfer protein. The polypeptide is Tumor necrosis factor alpha-induced protein 8-like protein 3 (tnfaip8l3) (Xenopus laevis (African clawed frog)).